We begin with the raw amino-acid sequence, 296 residues long: MHRLLAWDAACLPPPPAAFRPMEVANFYYEPDCLAYGAKAARAAPRAPAAEPAIGEHERAIDFSPYLEPLAPAADFAAPAPAHHDFLSDLFADDYGAKPSKKPADYGYVSLGRAGAKAAPPACFPPPPPAALKAEPGFEPADCKRADDAPAMAAGFPFALRAYLGYQATPSGSSGSLSTSSSSSPPGTPSPADAKAAPAACFAGPPAAPAKAKAKKTVDKLSDEYKMRRERNNIAVRKSRDKAKMRNLETQHKVLELTAENERLQKKVEQLSRELSTLRNLFKQLPEPLLASAGHC.

The segment at 1 to 22 (MHRLLAWDAACLPPPPAAFRPM) is required for Lys-133 sumoylation. An Asymmetric dimethylarginine; by CARM1 modification is found at Arg-3. The required for MYC transcriptional repression stretch occupies residues 22–104 (MEVANFYYEP…YGAKPSKKPA (83 aa)). Lys-39 bears the N6-acetyllysine; alternate mark. Lys-39 is modified (N6-methylated lysine; alternate). Lys-98 and Lys-101 each carry N6-acetyllysine; by KAT2A and KAT2B. Position 102 is an N6-acetyllysine; by KAT2A and KAT2B; alternate (Lys-102). Residues Lys-102 and Lys-133 each participate in a glycyl lysine isopeptide (Lys-Gly) (interchain with G-Cter in SUMO2); alternate cross-link. Lys-133 is covalently cross-linked (Glycyl lysine isopeptide (Lys-Gly) (interchain with G-Cter in SUMO); alternate). Residue Lys-144 forms a Glycyl lysine isopeptide (Lys-Gly) (interchain with G-Cter in SUMO2) linkage. The disordered stretch occupies residues 171-199 (SGSSGSLSTSSSSSPPGTPSPADAKAAPA). Position 179 is a phosphothreonine; by GSK3-beta (Thr-179). 2 O-linked (GlcNAc) serine glycosylation sites follow: Ser-180 and Ser-181. Phosphoserine; by GSK3-beta is present on Ser-184. Phosphothreonine; by RPS6KA1, CDK2 and MAPK is present on Thr-188. Residues Lys-211 and Lys-213 each participate in a glycyl lysine isopeptide (Lys-Gly) (interchain with G-Cter in SUMO2) cross-link. Residue Thr-217 is modified to Phosphothreonine; by RPS6KA1 and PKC/PRKCA. In terms of domain architecture, bZIP spans 222–285 (SDEYKMRRER…STLRNLFKQL (64 aa)). A basic motif region spans residues 226–246 (KMRRERNNIAVRKSRDKAKMR). Ser-239 is modified (phosphoserine; by PKC/PRKCA). The leucine-zipper stretch occupies residues 248–255 (LETQHKVL). Ser-276 is subject to Phosphoserine; by CaMK2. Residue Lys-283 forms a Glycyl lysine isopeptide (Lys-Gly) (interchain with G-Cter in SUMO2) linkage.

This sequence belongs to the bZIP family. C/EBP subfamily. In terms of assembly, binds DNA as a homodimer and as a heterodimer. Interacts with ATF4. Binds DNA as a heterodimer with ATF4. Interacts with MYB; within the complex, MYB and CEBPB bind to different promoter regions. Can form stable heterodimers with CEBPA, CEBPD and CEBPE. Interacts with SIX1. Isoform 2 and isoform 3 also form heterodimers. Interacts with TRIM28 and PTGES2. Interacts with PRDM16. Interacts with CCDC85B. Forms a complex with THOC5. Interacts with ZNF638; this interaction increases transcriptional activation. Interacts with CIDEA and CIDEC. Interaction with CIDEA increases transcriptional activation of a subset of CEBPB downstream target genes, including ID2, IGF1, PRLR, SOCS1, SOCS3, XDH. Interaction with CIDEC increases transcriptional activation of SOCS1, SOCS3, TGFB1, TGFBR1, ID2 and XDH. Interacts with DDIT3/CHOP. Interacts with EP300; recruits EP300 to chromatin. Interacts with RORA; the interaction disrupts interaction with EP300. Interacts (not methylated) with MED23, MED26, SMARCA2, SMARCB1 and SMARCC1. Interacts with KAT2A and KAT2B. Interacts with ATF5; EP300 is required for ATF5 and CEBPB interaction and DNA binding. Interacts with NFE2L1; the heterodimer represses expression of DSPP during odontoblast differentiation. In terms of processing, sumoylated by polymeric chains of SUMO2 or SUMO3. Sumoylation at Lys-133 is required for inhibition of T-cells proliferation. In adipocytes, sumoylation at Lys-133 by PIAS1 leads to ubiquitination and subsequent proteasomal degradation. Desumoylated by SENP2, which abolishes ubiquitination and stabilizes protein levels. Ubiquitinated, leading to proteasomal degradation. Post-translationally, phosphorylated at Thr-188 by MAPK and CDK2, serves to prime phosphorylation at Thr-179 and Ser-184 by GSK3B and acquire DNA-binding as well as transactivation activities, required to induce adipogenesis. MAPK and CDK2 act sequentially to maintain Thr-188 in the primed phosphorylated state during mitotical cloning expansion and thereby progression of terminal differentiation. Phosphorylation at Thr-217 enhances transactivation activity. Phosphorylation at Ser-276 in response to calcium increases transactivation activity. Phosphorylated at Thr-188 by RPS6KA1. In terms of processing, O-glycosylated, glycosylation at Ser-180 and Ser-181 prevents phosphorylation on Thr-188, Ser-184 and Thr-179 and DNA binding activity which delays the adipocyte differentiation program. Acetylated. Acetylation at Lys-39 is an important and dynamic regulatory event that contributes to its ability to transactivate target genes, including those associated with adipogenesis and adipocyte function. Deacetylation by HDAC1 represses its transactivation activity. Acetylated by KAT2A and KAT2B within a cluster of lysine residues between amino acids 98-102, this acetylation is strongly induced by glucocorticoid treatment and enhances transactivation activity. Post-translationally, methylated. Methylation at Arg-3 by CARM1 and at Lys-39 by EHMT2, inhibits transactivation activity. Methylation is probably inhibited by phosphorylation at Thr-188. In terms of tissue distribution, abundantly expressed in myoblasts. Enriched in brown adipose tissue (BAT) versus white adipose tissue (WAT). Expressed in hepatocytes (at protein level). Expressed in T lymphocytes. The expression in granulosa cells of antral follicles is induced by luteinizing hormone. Expressed in chondrocytes and osteoblasts (at protein level).

It is found in the nucleus. The protein resides in the cytoplasm. Its function is as follows. Important transcription factor regulating the expression of genes involved in immune and inflammatory responses. Also plays a significant role in adipogenesis, as well as in the gluconeogenic pathway, liver regeneration, and hematopoiesis. The consensus recognition site is 5'-T[TG]NNGNAA[TG]-3'. Its functional capacity is governed by protein interactions and post-translational protein modifications. During early embryogenesis, plays essential and redundant roles with CEBPA. Has a promitotic effect on many cell types such as hepatocytes and adipocytes but has an antiproliferative effect on T-cells by repressing MYC expression, facilitating differentiation along the T-helper 2 lineage. Binds to regulatory regions of several acute-phase and cytokines genes and plays a role in the regulation of acute-phase reaction and inflammation. Also plays a role in intracellular bacteria killing. During adipogenesis, is rapidly expressed and, after activation by phosphorylation, induces CEBPA and PPARG, which turn on the series of adipocyte genes that give rise to the adipocyte phenotype. The delayed transactivation of the CEBPA and PPARG genes by CEBPB appears necessary to allow mitotic clonal expansion and thereby progression of terminal differentiation. Essential for female reproduction because of a critical role in ovarian follicle development. Restricts osteoclastogenesis. Together with NFE2L1; represses expression of DSPP during odontoblast differentiation. In terms of biological role, essential for gene expression induction in activated macrophages. Plays a major role in immune responses such as CD4(+) T-cell response, granuloma formation and endotoxin shock. Not essential for intracellular bacteria killing. Acts as a dominant negative through heterodimerization with isoform 2. Promotes osteoblast differentiation and osteoclastogenesis. This Mus musculus (Mouse) protein is CCAAT/enhancer-binding protein beta.